The following is a 126-amino-acid chain: MRYSLKSGANETREFKFHSEDVRIYCSVIGKEYDGTVPPLMCAKLWPKFKMFQIFKGEAIRLVRTNVELFENLESDIQYCAYLTHKKSEKVKQFDRFIFKLEINKNNKTRMIIEQTFISEDGIYGF.

In Staphylococcus haemolyticus (strain JCSC1435), this protein is Protein VraC.